The following is a 252-amino-acid chain: Flagellar brake protein YcgR (252 aa).

In terms of domain architecture, PilZ spans 118–236 (QRREYFRVSI…EKGLQRAIFE (119 aa)).

It belongs to the YcgR family. Monomer. Interacts with the flagellar basal bodies.

It localises to the bacterial flagellum basal body. Acts as a flagellar brake, regulating swimming and swarming in a bis-(3'-5') cyclic diguanylic acid (c-di-GMP)-dependent manner. Binds 1 c-di-GMP dimer per subunit. Increasing levels of c-di-GMP lead to decreased motility. This Yersinia pseudotuberculosis serotype I (strain IP32953) protein is Flagellar brake protein YcgR.